We begin with the raw amino-acid sequence, 370 residues long: Phosphoserine aminotransferase (370 aa).

At Met-1 the chain carries N-acetylmethionine. Positions 44 and 45 each coordinate O-phospho-L-serine. Lys-51 bears the N6-acetyllysine mark. Pyridoxal 5'-phosphate is bound by residues Gly-79, Cys-80, and Trp-107. Lys-127 carries the N6-acetyllysine modification. Pyridoxal 5'-phosphate contacts are provided by Thr-156, Asp-176, and Gln-199. N6-(pyridoxal phosphate)lysine is present on Lys-200. Pyridoxal 5'-phosphate contacts are provided by Asn-241 and Thr-242. N6-acetyllysine is present on residues Lys-269, Lys-318, and Lys-323. A Phosphoserine modification is found at Ser-331. Lys-333 carries the N6-acetyllysine modification. Residues His-335, Arg-336, and Arg-342 each coordinate O-phospho-L-serine.

It belongs to the class-V pyridoxal-phosphate-dependent aminotransferase family. SerC subfamily. In terms of assembly, homodimer. The cofactor is pyridoxal 5'-phosphate. Expressed at high levels in the brain, liver, kidney and pancreas, and very weakly expressed in the thymus, prostate, testis and colon.

The enzyme catalyses O-phospho-L-serine + 2-oxoglutarate = 3-phosphooxypyruvate + L-glutamate. The protein operates within amino-acid biosynthesis; L-serine biosynthesis; L-serine from 3-phospho-D-glycerate: step 2/3. Phosphoserine transaminase activity is strongly stimulated by increasing the ionic strength. Functionally, involved in L-serine biosynthesis via the phosphorylated pathway, a three-step pathway converting the glycolytic intermediate 3-phospho-D-glycerate into L-serine. Catalyzes the second step, that is the pyridoxal 5'-phosphate-dependent transamination of 3-phosphohydroxypyruvate and L-glutamate to O-phosphoserine (OPS) and alpha-ketoglutarate. The polypeptide is Phosphoserine aminotransferase (Homo sapiens (Human)).